We begin with the raw amino-acid sequence, 1873 residues long: SAGA complex subunit Spt20 (1873 aa).

It belongs to the SPT20 family. In terms of assembly, component of the Spt-Ada-Gcn5 acetyltransferase (SAGA) complex consisting of wda/Taf5L, Saf6, Taf9, Taf10b, Taf12, Ada1, Spt3, Spt7, Spt20, Sf3b3, Sf3b5, Nipped-A/Tra1, a histone acetyltransferase (HAT) module made up of Gcn5, Ada2b (Isoform B), Ada3 and Sgf29, and a deubiquitinase (DUB) module made up of not/nonstop, Sgf11 and e(y)2 tethered to SAGA by Atxn7.

The protein localises to the nucleus. Its function is as follows. Component of the transcription regulatory complex SAGA, a multiprotein complex that activates transcription by remodeling chromatin and mediating histone acetylation and deubiquitination. The SAGA complex predominantly acetylates histone H3. The polypeptide is SAGA complex subunit Spt20 (Drosophila melanogaster (Fruit fly)).